Consider the following 425-residue polypeptide: MAPEPEDIKDEKNPRPLDEDDIALLKTYGLGPYSTHIKKAEKEVKDLAKKVNDLCGIKESDTGLAAPSQWDLVSDKQMMQEEQPLQVARCTKIINPNSEDAKYVINVKQIAKFVVGLGDKVSPTDIEEGMRVGVDRNKYQIQIPLPPKIDPSVTMMTVEEKPDVTYNDVGGCKEQIEKMREVVELPMLHPEKFVKLGIDPPKGVLCYGPPGTGKTLLARAVANRTDACFIRVIGSELVQKYVGEGARMVRELFQMARSKKACIVFFDEVDAIGGARFDDGVGGDNEVQRTMLEIVNQLDGFDARGNIKVLMATNRPDTLDPALLRPGRLDRKVEFGLPDLESRTQIFKIHTRTMNCERDIRFELLARLCPNSTGADIRSVCTEAGMYAIRARRKTVTEKDFLDAVNKVIKGYQKFSATPKYMVYN.

An ATP-binding site is contributed by glycine 208–threonine 215.

This sequence belongs to the AAA ATPase family.

The protein localises to the cytoplasm. It is found in the nucleus. The 26S proteasome is involved in the ATP-dependent degradation of ubiquitinated proteins. The regulatory (or ATPase) complex confers ATP dependency and substrate specificity to the 26S complex. The polypeptide is 26S proteasome regulatory subunit 7 (RPT1) (Prunus persica (Peach)).